The following is a 410-amino-acid chain: uncharacterized protein (410 aa).

Residues Met-1–Ala-41 form the signal peptide.

Interacts with PcrA, Pdp, YclM, YkvL, YhcQ and YomL. The interaction with PcrA is not essential for cell viability or repair of UV-induced lesions.

Its subcellular location is the secreted. Increases the processivity of the PcrA helicase, but does not bind to DNA. This is an uncharacterized protein from Bacillus subtilis (strain 168).